The following is a 2039-amino-acid chain: Calcium-channel protein CCH1 (2039 aa).

Disordered regions lie at residues 1 to 171 (MQGR…PPRS) and 206 to 288 (PQLK…PQKE). Residues 64–80 (STEEKKGDEYNGNDKDS) show a composition bias toward basic and acidic residues. Asparagine 98 carries an N-linked (GlcNAc...) asparagine glycan. Low complexity-rich tracts occupy residues 122–132 (SPSTKSAKSSS) and 147–164 (FSSY…SPSS). Basic and acidic residues predominate over residues 209–226 (KSEKSRPVSDVGEDRGEG). N-linked (GlcNAc...) asparagine glycans are attached at residues asparagine 257 and asparagine 269. A compositionally biased stretch (basic residues) spans 271–281 (SRKKPSPKFFH). Residue serine 284 is modified to Phosphoserine. Residues 346–366 (YSLLYNTLLTFYAILLAIRTY) form a helical membrane-spanning segment. A glycan (N-linked (GlcNAc...) asparagine) is linked at asparagine 379. The chain crosses the membrane as a helical span at residues 384–404 (FIFILSACFTGNDIAKIIAFG). N-linked (GlcNAc...) asparagine glycosylation occurs at asparagine 559. A run of 3 helical transmembrane segments spans residues 563–583 (MLVY…QGSF), 658–678 (IVNS…TDLM), and 691–711 (LFFI…LIAV). Residues asparagine 754 and asparagine 760 are each glycosylated (N-linked (GlcNAc...) asparagine). Transmembrane regions (helical) follow at residues 766 to 786 (LAIY…DIGM), 809 to 829 (ISIV…PNMW), and 841 to 861 (FIIS…VLGH). N-linked (GlcNAc...) asparagine glycans are attached at residues asparagine 882 and asparagine 900. 2 consecutive transmembrane segments (helical) span residues 904-924 (FYFF…EGVI) and 942-962 (SFLS…LYAL). N-linked (GlcNAc...) asparagine glycosylation occurs at asparagine 968. The chain crosses the membrane as a helical span at residues 978-998 (FFIIWFLLSNSVILNIFIALI). The N-linked (GlcNAc...) asparagine glycan is linked to asparagine 1153. A helical membrane pass occupies residues 1207–1227 (VFVFIFALATILLIVCSCYVT). Asparagine 1240 carries N-linked (GlcNAc...) asparagine glycosylation. Transmembrane regions (helical) follow at residues 1247–1267 (CAFI…DGFI) and 1277–1297 (PWNF…IAYL). N-linked (GlcNAc...) asparagine glycosylation occurs at asparagine 1302. The next 2 helical transmembrane spans lie at 1340 to 1360 (IFEA…WGLS) and 1408 to 1428 (FASA…VDLL). A glycan (N-linked (GlcNAc...) asparagine) is linked at asparagine 1433. Transmembrane regions (helical) follow at residues 1452-1472 (FLVL…VSFI), 1529-1549 (NFYY…MLLS), 1554-1574 (PGNL…VFLI), 1596-1616 (IRLS…HVPA), and 1618-1638 (HYWF…FIIP). Residue asparagine 1640 is glycosylated (N-linked (GlcNAc...) asparagine). A helical transmembrane segment spans residues 1654–1674 (LPPILSLTYTWGVLFLVYAIA). Residues asparagine 1687 and asparagine 1732 are each glycosylated (N-linked (GlcNAc...) asparagine). Residues 1748–1768 (LMSWNIISMYIFVNMFVSLII) traverse the membrane as a helical segment. 2 N-linked (GlcNAc...) asparagine glycosylation sites follow: asparagine 1770 and asparagine 1785. In terms of domain architecture, EF-hand spans 1787 to 1822 (SEIKKYIEAWSKFDTDGTGELELSYLPRIMHSFDGP). A disordered region spans residues 2011–2039 (PRMNQDSTMEPPEEPIDNNDDSANDLIDR). Residues 2021–2033 (PPEEPIDNNDDSA) are compositionally biased toward acidic residues.

The protein belongs to the calcium channel alpha-1 subunit (TC 1.A.1.11) family. In terms of assembly, interacts with MID1 to form a Ca(2+) influx channel.

It localises to the cell membrane. Voltage-gated, high-affinity calcium channel that functions together with MID1 to mediate calcium entry into cells. Required during conditions of environmental stress. The sequence is that of Calcium-channel protein CCH1 (CCH1) from Saccharomyces cerevisiae (strain ATCC 204508 / S288c) (Baker's yeast).